A 716-amino-acid polypeptide reads, in one-letter code: Protein C-mannosyl-transferase DPY19L3 (716 aa).

At 1–43 (MMSIRQRREIRATEVSEDFPAQEENVKLENKLPSGCTSRRLWK) the chain is on the cytoplasmic side. Residues 44 to 64 (ILSLTIGGTIALCIGLLTSVY) form a helical membrane-spanning segment. The Lumenal portion of the chain corresponds to 65 to 154 (LATLHENDLW…RVLPVQKYLE (90 aa)). Asn118 is a glycosylation site (N-linked (GlcNAc...) asparagine). The helical transmembrane segment at 155–182 (PVYFYIYTLFGLQAIYVTALYITSWLLS) threads the bilayer. Residues 183 to 184 (GT) are Cytoplasmic-facing. The segment at residues 185 to 197 (WLSGLLAAFWYVT) is an intramembrane region (name=3). At 198-215 (NRIDTTRVEFTIPLRENW) the chain is on the cytoplasmic side. An intramembrane region (name=4) is located at residues 216–230 (ALPFFAIQIAAITYF). Over 231 to 239 (LRPNLQPLS) the chain is Cytoplasmic. The helical transmembrane segment at 240 to 256 (ERLTLLAIFISTFLFSL) threads the bilayer. The Lumenal portion of the chain corresponds to 257–262 (TWQFNQ). A helical transmembrane segment spans residues 263–279 (FMMLMQALVLFTLDSLD). Topologically, residues 280–289 (MLPAVKATWL) are cytoplasmic. Residues 290-306 (YGIQITSLLLVCILQFF) form a helical membrane-spanning segment. The Lumenal segment spans residues 307-308 (NS). The helical transmembrane segment at 309 to 323 (MILGSLLISFNLSVF) threads the bilayer. At 324-338 (IARKLQKNLKTGSFL) the chain is on the cytoplasmic side. The helical transmembrane segment at 339 to 359 (NRLGKLLLHLFMVLCLTLFLN) threads the bilayer. The Lumenal segment spans residues 360 to 414 (NIIKKILNLKSDEHIFKFLKAKFGLGATRDFDANLYLCEEAFGLLPFNTFGRLSD). The chain crosses the membrane as a helical span at residues 415-437 (TLLFYAYIFVLSITVIVAFVVAF). Over 438-465 (HNLSDSTNQQSVGKMEKGTVDLKPETAY) the chain is Cytoplasmic. Residues 466-485 (NLIHTILFGFLALSTMRMKY) form a helical membrane-spanning segment. The Lumenal segment spans residues 486 to 487 (LW). A helical membrane pass occupies residues 488-499 (TSHMCVFASFGL). Residues 500–522 (CSPEIWELLLKSVHLYNPKRICI) are Cytoplasmic-facing. Residues 523–539 (MRYSVPILILLYLCYKF) form a helical membrane-spanning segment. At 540-716 (WPGMMDELSE…FHVYKLSRNK (177 aa)) the chain is on the lumenal side. Asn704 carries an N-linked (GlcNAc...) asparagine glycan.

Belongs to the dpy-19 family.

It is found in the endoplasmic reticulum membrane. It catalyses the reaction L-tryptophyl-[protein] + a di-trans,poly-cis-dolichyl beta-D-mannosyl phosphate = C-alpha-D-mannosyl-L-tryptophyl-[protein] + a di-trans,poly-cis-dolichyl phosphate + H(+). It participates in protein modification; protein glycosylation. Functionally, C-mannosyltransferase that mediates C-mannosylation of tryptophan residues on target proteins. The reaction occurs on the luminal side of the endoplasmic reticulum and involves the transfer of a mannose unit from a dolichylphosphate mannose (Dol-P-Man) donor to an acceptor protein containing a WxxW or WxxC consensus sequence. C-mannosylates RSPO1, a Wnt signaling regulator, preferentially at the first Trp residue in the sequence WxxW. C-mannosylates the netrin receptor UNC5A, preferentially at the third tryptophan of WxxWxxWxxC sequence. The polypeptide is Protein C-mannosyl-transferase DPY19L3 (DPY19L3) (Pongo abelii (Sumatran orangutan)).